The sequence spans 230 residues: ATP synthase subunit a (230 aa).

A run of 5 helical transmembrane segments spans residues 17-37 (LPIT…FIMA), 78-98 (IFPF…IGVI), 107-127 (DLSV…WFGI), 165-187 (LFGN…GFLV), and 198-218 (EAII…AGGI).

Belongs to the ATPase A chain family. As to quaternary structure, F-type ATPases have 2 components, CF(1) - the catalytic core - and CF(0) - the membrane proton channel. CF(1) has five subunits: alpha(3), beta(3), gamma(1), delta(1), epsilon(1). CF(0) has three main subunits: a(1), b(2) and c(9-12). The alpha and beta chains form an alternating ring which encloses part of the gamma chain. CF(1) is attached to CF(0) by a central stalk formed by the gamma and epsilon chains, while a peripheral stalk is formed by the delta and b chains.

Its subcellular location is the cell inner membrane. In terms of biological role, key component of the proton channel; it plays a direct role in the translocation of protons across the membrane. The sequence is that of ATP synthase subunit a from Legionella pneumophila subsp. pneumophila (strain Philadelphia 1 / ATCC 33152 / DSM 7513).